Reading from the N-terminus, the 551-residue chain is Small ribosomal subunit protein bS1 (551 aa).

S1 motif domains lie at Gly21 to Glu83, Gly101 to Arg167, Gly188 to Lys256, Asn273 to Lys343, Asp360 to Lys430, and Asp447 to Lys516.

Belongs to the bacterial ribosomal protein bS1 family.

Functionally, binds mRNA; thus facilitating recognition of the initiation point. It is needed to translate mRNA with a short Shine-Dalgarno (SD) purine-rich sequence. This Coxiella burnetii (strain RSA 493 / Nine Mile phase I) protein is Small ribosomal subunit protein bS1 (rpsA).